Here is a 372-residue protein sequence, read N- to C-terminus: Flagellar P-ring protein (372 aa).

The N-terminal stretch at 1 to 29 (MPARPIPVPAFALALALAAALAVPAPAAA) is a signal peptide.

The protein belongs to the FlgI family. In terms of assembly, the basal body constitutes a major portion of the flagellar organelle and consists of four rings (L,P,S, and M) mounted on a central rod.

It localises to the periplasm. The protein resides in the bacterial flagellum basal body. In terms of biological role, assembles around the rod to form the L-ring and probably protects the motor/basal body from shearing forces during rotation. The chain is Flagellar P-ring protein from Anaeromyxobacter dehalogenans (strain 2CP-1 / ATCC BAA-258).